Reading from the N-terminus, the 1700-residue chain is Balbiani ring protein 3 (1700 aa).

The N-terminal stretch at 1 to 20 is a signal peptide; sequence MKTLSSLLLVLAVNVLLIQA.

In terms of tissue distribution, salivary gland.

It is found in the secreted. In terms of biological role, used by the larvae to construct a supramolecular structure, the larval tube. Balbiani ring protein 3 could play a role as a transport protein that binds to other proteins intracellularly and in the gland lumen in order to prevent these from forming water-insoluble fibers too early. This Chironomus tentans (Midge) protein is Balbiani ring protein 3 (BR3).